The sequence spans 564 residues: Carbamoyl phosphate synthase large chain, N-terminal section (564 aa).

The segment at 1–399 (MPETPNKVLI…ALQKAIRSLE (399 aa)) is carboxyphosphate synthetic domain. ATP-binding residues include R127, R167, G173, G174, E206, V208, E213, G239, V240, H241, Q282, and E296. The ATP-grasp domain maps to 131 to 325 (RAFMKKIGEP…IARIAAKIAI (195 aa)). Mg(2+) contacts are provided by Q282, E296, and N298. Residues Q282, E296, and N298 each coordinate Mn(2+). The oligomerization domain stretch occupies residues 400 to 560 (IGEPGLGPSP…YSTYEEECEA (161 aa)).

This sequence belongs to the CarB family. In terms of assembly, composed of two chains; the small (or glutamine) chain promotes the hydrolysis of glutamine to ammonia, which is used by the large (or ammonia) chain to synthesize carbamoyl phosphate. Tetramer of heterodimers (alpha,beta)4. Requires Mg(2+) as cofactor. The cofactor is Mn(2+).

The catalysed reaction is hydrogencarbonate + L-glutamine + 2 ATP + H2O = carbamoyl phosphate + L-glutamate + 2 ADP + phosphate + 2 H(+). The enzyme catalyses hydrogencarbonate + NH4(+) + 2 ATP = carbamoyl phosphate + 2 ADP + phosphate + 2 H(+). Its pathway is amino-acid biosynthesis; L-arginine biosynthesis; carbamoyl phosphate from bicarbonate: step 1/1. It functions in the pathway pyrimidine metabolism; UMP biosynthesis via de novo pathway; (S)-dihydroorotate from bicarbonate: step 1/3. In terms of biological role, large subunit of the glutamine-dependent carbamoyl phosphate synthetase (CPSase). CPSase catalyzes the formation of carbamoyl phosphate from the ammonia moiety of glutamine, carbonate, and phosphate donated by ATP, constituting the first step of 2 biosynthetic pathways, one leading to arginine and/or urea and the other to pyrimidine nucleotides. The large subunit (synthetase) binds the substrates ammonia (free or transferred from glutamine from the small subunit), hydrogencarbonate and ATP and carries out an ATP-coupled ligase reaction, activating hydrogencarbonate by forming carboxy phosphate which reacts with ammonia to form carbamoyl phosphate. In Methanopyrus kandleri (strain AV19 / DSM 6324 / JCM 9639 / NBRC 100938), this protein is Carbamoyl phosphate synthase large chain, N-terminal section (carB1).